A 947-amino-acid chain; its full sequence is Beta-glucosidase (947 aa).

The active site involves Asp-696.

The protein belongs to the glycosyl hydrolase 3 family.

It catalyses the reaction Hydrolysis of terminal, non-reducing beta-D-glucosyl residues with release of beta-D-glucose.. Its pathway is glycan metabolism; cellulose degradation. This Ruminococcus albus protein is Beta-glucosidase.